A 251-amino-acid chain; its full sequence is Hydroxyacylglutathione hydrolase (251 aa).

Zn(2+) is bound by residues histidine 53, histidine 55, aspartate 57, histidine 58, histidine 110, aspartate 127, and histidine 165.

This sequence belongs to the metallo-beta-lactamase superfamily. Glyoxalase II family. Monomer. Zn(2+) is required as a cofactor.

The catalysed reaction is an S-(2-hydroxyacyl)glutathione + H2O = a 2-hydroxy carboxylate + glutathione + H(+). It functions in the pathway secondary metabolite metabolism; methylglyoxal degradation; (R)-lactate from methylglyoxal: step 2/2. Its function is as follows. Thiolesterase that catalyzes the hydrolysis of S-D-lactoyl-glutathione to form glutathione and D-lactic acid. The protein is Hydroxyacylglutathione hydrolase of Buchnera aphidicola subsp. Acyrthosiphon pisum (strain APS) (Acyrthosiphon pisum symbiotic bacterium).